The sequence spans 655 residues: Protein npp-24 (655 aa).

A helical membrane pass occupies residues 263-283 (ICSVFVLVSGGGVLSHLVVFP).

The protein resides in the membrane. This is Protein npp-24 from Caenorhabditis elegans.